The following is a 238-amino-acid chain: MAAAPLLLLLLLVPVPLLPLLAQGPGGALGNRHAVYWNSSNQHLRREGYTVQVNVNDYLDIYCPHYNSSGVGPGAGPGPGGGAEQYVLYMVSRNGYRTCNASQGFKRWECNRPHAPHSPIKFSEKFQRYSAFSLGYEFHAGHEYYYISTPTHNLHWKCLRMKVFVCCASTSHSGEKPVPTLPQFTMGPNVKINVLEDFEGENPQVPKLEKSISGTSPKREHLPLAVGIAFFLMTFLAS.

Positions M1–A22 are cleaved as a signal peptide. Residues G30–S169 enclose the Ephrin RBD domain. Residues N38, N67, and N100 are each glycosylated (N-linked (GlcNAc...) asparagine). Intrachain disulfides connect C63-C110 and C99-C158. G214 is lipidated: GPI-anchor amidated glycine. Residues T215–S238 constitute a propeptide, removed in mature form.

The protein belongs to the ephrin family. Interacts with EPHA8; activates EPHA8. In terms of tissue distribution, expressed in brain, skeletal muscle, spleen, thymus, prostate, testis, ovary, small intestine, and peripheral blood leukocytes.

The protein localises to the cell membrane. In terms of biological role, cell surface GPI-bound ligand for Eph receptors, a family of receptor tyrosine kinases which are crucial for migration, repulsion and adhesion during neuronal, vascular and epithelial development. Binds promiscuously Eph receptors residing on adjacent cells, leading to contact-dependent bidirectional signaling into neighboring cells. The signaling pathway downstream of the receptor is referred to as forward signaling while the signaling pathway downstream of the ephrin ligand is referred to as reverse signaling. This chain is Ephrin-A3 (EFNA3), found in Homo sapiens (Human).